The sequence spans 230 residues: Porin OmpL (230 aa).

The signal sequence occupies residues 1–20 (MKSLNTLVILTSVISTSVFA).

This sequence belongs to the oligogalacturonate-specific porin KdgM (TC 1.B.35) family. OmpL subfamily.

The protein localises to the cell outer membrane. Outer membrane channel protein that allows an efficient diffusion of low-molecular-weight solutes such as small sugars and tetraglycine. However, the specific substrate recognized by the OmpL channel is unknown. The chain is Porin OmpL (ompL) from Salmonella typhi.